The chain runs to 189 residues: Protein GrpE (189 aa).

A disordered region spans residues 1-22 (MKEQQKETEQNIEEINDETVTE). Residues 10-22 (QNIEEINDETVTE) show a composition bias toward acidic residues.

The protein belongs to the GrpE family. As to quaternary structure, homodimer.

Its subcellular location is the cytoplasm. Participates actively in the response to hyperosmotic and heat shock by preventing the aggregation of stress-denatured proteins, in association with DnaK and GrpE. It is the nucleotide exchange factor for DnaK and may function as a thermosensor. Unfolded proteins bind initially to DnaJ; upon interaction with the DnaJ-bound protein, DnaK hydrolyzes its bound ATP, resulting in the formation of a stable complex. GrpE releases ADP from DnaK; ATP binding to DnaK triggers the release of the substrate protein, thus completing the reaction cycle. Several rounds of ATP-dependent interactions between DnaJ, DnaK and GrpE are required for fully efficient folding. This chain is Protein GrpE, found in Leuconostoc citreum (strain KM20).